The primary structure comprises 685 residues: Translation initiation factor IF-2 (685 aa).

The 170-residue stretch at 185–354 (KRPPVVTVMG…LLTAEMQELK (170 aa)) folds into the tr-type G domain. The interval 194-201 (GHVDHGKT) is G1. 194-201 (GHVDHGKT) is a binding site for GTP. Positions 219–223 (GITQH) are G2. The tract at residues 240-243 (DTPG) is G3. Residues 240–244 (DTPGH) and 294–297 (NKMD) contribute to the GTP site. A G4 region spans residues 294 to 297 (NKMD). The G5 stretch occupies residues 330–332 (SAH).

The protein belongs to the TRAFAC class translation factor GTPase superfamily. Classic translation factor GTPase family. IF-2 subfamily.

It localises to the cytoplasm. Functionally, one of the essential components for the initiation of protein synthesis. Protects formylmethionyl-tRNA from spontaneous hydrolysis and promotes its binding to the 30S ribosomal subunits. Also involved in the hydrolysis of GTP during the formation of the 70S ribosomal complex. This chain is Translation initiation factor IF-2, found in Clostridium tetani (strain Massachusetts / E88).